Consider the following 198-residue polypeptide: Recombination protein RecR (198 aa).

The segment at 58–73 (CSVCNNLTEKDPCDFC) adopts a C4-type zinc-finger fold. The region spanning 81 to 175 (NLICVVESPK…KVTRIAHGLP (95 aa)) is the Toprim domain.

Belongs to the RecR family.

Functionally, may play a role in DNA repair. It seems to be involved in an RecBC-independent recombinational process of DNA repair. It may act with RecF and RecO. This chain is Recombination protein RecR, found in Halothermothrix orenii (strain H 168 / OCM 544 / DSM 9562).